The chain runs to 219 residues: Thiopurine S-methyltransferase (219 aa).

4 residues coordinate S-adenosyl-L-methionine: Trp10, Leu45, Glu66, and Arg123.

The protein belongs to the class I-like SAM-binding methyltransferase superfamily. TPMT family.

The protein resides in the cytoplasm. The catalysed reaction is S-adenosyl-L-methionine + a thiopurine = S-adenosyl-L-homocysteine + a thiopurine S-methylether.. This is Thiopurine S-methyltransferase from Bordetella petrii (strain ATCC BAA-461 / DSM 12804 / CCUG 43448).